A 91-amino-acid chain; its full sequence is Uteroglobin (91 aa).

An N-terminal signal peptide occupies residues 1-21 (MKLTIAIVLVTLTLFCRPAST).

Belongs to the secretoglobin family. Antiparallel homodimer; disulfide-linked. Interaction with LMBR1L is controversial.

It is found in the secreted. In terms of biological role, binds phosphatidylcholine, phosphatidylinositol, polychlorinated biphenyls (PCB) and weakly progesterone, potent inhibitor of phospholipase A2. This Bos taurus (Bovine) protein is Uteroglobin (SCGB1A1).